The following is a 159-amino-acid chain: Galactose-specific lectin nattectin (159 aa).

Residues 1–21 (MASVPHFTVFLFLACALGIGA) form the signal peptide. The propeptide occupies 22–24 (NVT). 3 disulfides stabilise this stretch: Cys-31–Cys-42, Cys-59–Cys-155, and Cys-132–Cys-147. The region spanning 38–156 (HGSRCFTFHR…CKVKRSFLCA (119 aa)) is the C-type lectin domain. The Ca(2+) site is built by Gln-122, Asp-124, Glu-130, and Asn-143. The Galactose-binding signature appears at 122–124 (QPD).

As to quaternary structure, monomer. In terms of processing, not glycosylated. As to expression, expressed by the venom gland.

Its subcellular location is the secreted. Its function is as follows. Galactose specific lectin that exhibits hemagglutination activity (minimum hemagluttination concentration = 2.5 ug/well) in a calcium-independent fashion. Has remarkable pro-inflammatory activity, inducing neutrophil mobilization in mice. Plays a crucial role in the innate immune system and chronic manifestations, especially in neutrophil mobilization. This is Galactose-specific lectin nattectin from Thalassophryne nattereri (Copper Joe toadfish).